Here is a 511-residue protein sequence, read N- to C-terminus: ATP synthase subunit alpha, mitochondrial (511 aa).

171 to 178 (GDRQTGKT) contributes to the ATP binding site.

The protein belongs to the ATPase alpha/beta chains family. F-type ATPases have 2 components, CF(1) - the catalytic core - and CF(0) - the membrane proton channel. CF(1) has five subunits: alpha(3), beta(3), gamma(1), delta(1), epsilon(1). CF(0) has three main subunits: a, b and c.

The protein resides in the mitochondrion. Its subcellular location is the mitochondrion inner membrane. Mitochondrial membrane ATP synthase (F(1)F(0) ATP synthase or Complex V) produces ATP from ADP in the presence of a proton gradient across the membrane which is generated by electron transport complexes of the respiratory chain. F-type ATPases consist of two structural domains, F(1) - containing the extramembraneous catalytic core, and F(0) - containing the membrane proton channel, linked together by a central stalk and a peripheral stalk. During catalysis, ATP synthesis in the catalytic domain of F(1) is coupled via a rotary mechanism of the central stalk subunits to proton translocation. Subunits alpha and beta form the catalytic core in F(1). Rotation of the central stalk against the surrounding alpha(3)beta(3) subunits leads to hydrolysis of ATP in three separate catalytic sites on the beta subunits. Subunit alpha does not bear the catalytic high-affinity ATP-binding sites. The polypeptide is ATP synthase subunit alpha, mitochondrial (ATPA) (Oenothera biennis (German evening primrose)).